The sequence spans 62 residues: Small ribosomal subunit protein eS30z/eS30y/eS30x (62 aa).

A disordered region spans residues 1–38 (MGKVHGSLARAGKVRGQTPKVAKQDKKKKPRGRAHKRL). Over residues 25 to 38 (DKKKKPRGRAHKRL) the composition is skewed to basic residues.

This sequence belongs to the eukaryotic ribosomal protein eS30 family.

This Arabidopsis thaliana (Mouse-ear cress) protein is Small ribosomal subunit protein eS30z/eS30y/eS30x (RPS30A).